A 515-amino-acid chain; its full sequence is tRNA-2-methylthio-N(6)-dimethylallyladenosine synthase (515 aa).

In terms of domain architecture, MTTase N-terminal spans 25–140; the sequence is KTYQVRTFGC…LPALLNRARH (116 aa). Residues Cys34, Cys69, Cys103, Cys177, Cys181, and Cys184 each coordinate [4Fe-4S] cluster. The Radical SAM core domain occupies 163 to 393; sequence RDSVYAGWVS…TALQDRIAAE (231 aa). Positions 396-466 constitute a TRAM domain; it reads AKQLGRKVEV…AFHLVADPAG (71 aa). The disordered stretch occupies residues 482–515; sequence DRSQADSCGVPAAGAASGKAGVSLGMPSLPTRRA. Low complexity predominate over residues 490–506; the sequence is GVPAAGAASGKAGVSLG.

It belongs to the methylthiotransferase family. MiaB subfamily. Monomer. Requires [4Fe-4S] cluster as cofactor.

The protein localises to the cytoplasm. It carries out the reaction N(6)-dimethylallyladenosine(37) in tRNA + (sulfur carrier)-SH + AH2 + 2 S-adenosyl-L-methionine = 2-methylsulfanyl-N(6)-dimethylallyladenosine(37) in tRNA + (sulfur carrier)-H + 5'-deoxyadenosine + L-methionine + A + S-adenosyl-L-homocysteine + 2 H(+). Catalyzes the methylthiolation of N6-(dimethylallyl)adenosine (i(6)A), leading to the formation of 2-methylthio-N6-(dimethylallyl)adenosine (ms(2)i(6)A) at position 37 in tRNAs that read codons beginning with uridine. In Paenarthrobacter aurescens (strain TC1), this protein is tRNA-2-methylthio-N(6)-dimethylallyladenosine synthase.